A 188-amino-acid chain; its full sequence is Small ribosomal subunit protein uS12m (188 aa).

The N-terminal 63 residues, 1–63 (MSGGRWISNL…AAFRLPQSSG (63 aa)), are a transit peptide targeting the mitochondrion.

This sequence belongs to the universal ribosomal protein uS12 family.

The protein localises to the mitochondrion. In terms of biological role, protein S12 is involved in the translation initiation step. This Oenothera elata subsp. hookeri (Hooker's evening primrose) protein is Small ribosomal subunit protein uS12m (RPS12).